The chain runs to 790 residues: Cadherin-6 (790 aa).

Residues 1 to 30 (MRTYHCFWLLFWAGQPHQSFLTLLSKRTSG) form the signal peptide. Residues 31–53 (FPEKEKVLVLSGNSRRDLSRSKR) constitute a propeptide that is removed on maturation. Cadherin domains are found at residues 54–159 (SWMW…EPMF), 160–268 (TKDV…PPRF), 269–383 (PQST…PPVF), 384–486 (SRPA…DNAP), and 487–608 (EFAM…LIHP). Over 54 to 615 (SWMWNQFFLL…IHPTGLSTGA (562 aa)) the chain is Extracellular. N-linked (GlcNAc...) asparagine glycosylation is found at asparagine 165 and asparagine 255. Positions 261–289 (VNDNPPRFPQSTYQFRAPESTPPDSPIGR) are disordered. N-linked (GlcNAc...) asparagine glycans are attached at residues asparagine 437, asparagine 455, and asparagine 536. A helical transmembrane segment spans residues 616-636 (LIAILLCIIILLVTVVLFAAL). Over 637–790 (RRQRKKEPLI…YGSMDSDKDS (154 aa)) the chain is Cytoplasmic.

It is found in the cell membrane. Functionally, cadherins are calcium-dependent cell adhesion proteins. They preferentially interact with themselves in a homophilic manner in connecting cells; cadherins may thus contribute to the sorting of heterogeneous cell types. This is Cadherin-6 (CDH6) from Gallus gallus (Chicken).